The following is a 122-amino-acid chain: Large ribosomal subunit protein uL14c (122 aa).

This sequence belongs to the universal ribosomal protein uL14 family. As to quaternary structure, part of the 50S ribosomal subunit.

The protein resides in the plastid. It is found in the chloroplast. Functionally, binds to 23S rRNA. The polypeptide is Large ribosomal subunit protein uL14c (Gossypium barbadense (Sea Island cotton)).